The chain runs to 86 residues: Small ribosomal subunit protein bS20 (86 aa).

Residues 1 to 25 (MANIKSQQKRNKTNERARLRNKSVK) form a disordered region.

This sequence belongs to the bacterial ribosomal protein bS20 family.

Binds directly to 16S ribosomal RNA. The sequence is that of Small ribosomal subunit protein bS20 from Mycobacterium avium (strain 104).